We begin with the raw amino-acid sequence, 52 residues long: MGANKTLNMKKRFGRKIKQNRPLPNWYRYKSDTNIRYNSKRRNWRRTKLKIY.

Belongs to the eukaryotic ribosomal protein eL39 family.

The protein is Large ribosomal subunit protein eL39 (RPL39) of Tetrahymena thermophila (strain SB210).